The sequence spans 603 residues: Conglutin beta 2 (603 aa).

A signal peptide spans 1-30 (MANMRVKFPTLVLLLGIVFLMAVSIGIAYG). Over residues 36–105 (KNHERPQERE…REPSRGREQE (70 aa)) the composition is skewed to basic and acidic residues. Disordered stretches follow at residues 36 to 177 (KNHE…RNPY), 343 to 363 (DGQEDEEQSRGQEQSHQDQGV), and 375 to 399 (LRKHAQSSSGKGKPSESGPFNLRSD). Over residues 137–147 (QGSSSSSGRQS) the composition is skewed to low complexity. Positions 148 to 172 (GYERREQREEREQQQEQDSRSESRR) are enriched in basic and acidic residues. The 159-residue stretch at 177–335 (YYFSYERFQT…TFNTRYEEIQ (159 aa)) folds into the Cupin type-1 1 domain. The span at 381–393 (SSSGKGKPSESGP) shows a compositional bias: low complexity. The 161-residue stretch at 394 to 554 (FNLRSDEPIY…TFPGSVEDVE (161 aa)) folds into the Cupin type-1 2 domain. Asn504 is a glycosylation site (N-linked (GlcNAc...) asparagine). A compositionally biased stretch (low complexity) spans 564–574 (YFANAQPQQQQ). A disordered region spans residues 564-583 (YFANAQPQQQQQREKEGRRG).

This sequence belongs to the 7S seed storage protein family. In terms of assembly, component of globulins complexes which accumulate in seeds.

Seed storage protein. Accumulates during seed development and is hydrolyzed after germination to provide a carbon and nitrogen source for the developing seedling. The protein is Conglutin beta 2 of Lupinus angustifolius (Narrow-leaved blue lupine).